A 312-amino-acid chain; its full sequence is Iron/alpha-ketoglutarate-dependent dioxygenase penM (312 aa).

Fe cation is bound by residues His134, Asp136, and His211. The interval 287 to 312 is disordered; sequence LGLKSEQPLPDGMEKGSMQETDIGGQ.

This sequence belongs to the PhyH family. As to quaternary structure, homodimer. Fe cation is required as a cofactor.

It carries out the reaction (-)-cyclopeptine + 2-oxoglutarate + O2 = (Z)-dehydrocyclopeptine + succinate + CO2 + H2O. The catalysed reaction is (Z)-dehydrocyclopeptine + 2-oxoglutarate + O2 = (-)-cyclopenine + succinate + CO2. The enzyme catalyses (-)-4'-methoxycyclopeptine + 2-oxoglutarate + O2 = (Z)-4'-methoxydehydrocyclopeptine + succinate + CO2 + H2O. It catalyses the reaction (Z)-4'-methoxydehydrocyclopeptine + 2-oxoglutarate + O2 = (-)-4'-methoxycyclopenine + succinate + CO2. The protein operates within secondary metabolite biosynthesis. It functions in the pathway alkaloid biosynthesis. It participates in mycotoxin biosynthesis. Iron/alpha-ketoglutarate-dependent dioxygenase; part of the gene cluster that mediates the biosynthesis of penigequinolones, potent insecticidal alkaloids that contain a highly modified 10-carbon prenyl group. The first stage is catalyzed by the nonribosomal peptide synthetase penN that condenses anthranilic acid and O-methyl-L-tyrosine to produce 4'-methoxycyclopeptin. 4'-methoxycyclopeptin is then converted to 4'-methoxydehydrocyclopeptin by the ketoglutarate-dependent dioxygenase penM through dehydrogenation to form a double bond between C-alpha and C-beta of the O-methyltyrosine side chain. PenM also converts its first product methoxydehydrocyclopeptin to 4'-methoxycyclopenin. The following conversion of 4'methoxycyclopenin into 4'-methoxyviridicatin is catalyzed by the cyclopenase penL. 4'-methoxyviridicatin is the precursor of quinolone natural products, and is further converted to quinolinone B. The prenyltransferase penI then catalyzes the canonical Friedel-Crafts alkylation of quinolinone B with dimethylallyl cation to yield dimethylallyl quinolone, which is subjected to FAD-dependent dehydrogenation by the FAD-linked oxidoreductase penH to yield conjugated aryl diene. The delta(3') double bond then serves as the site of the second alkylation with DMAPP catalyzed by the prenyltransferase penG to yield a carbenium ion intermediate, which can be attacked by H(2)O to yield a styrenyl quinolone containing a C3'-hydroxyprenyl chain, or undergo cyclization to yield yaequinolones J1 and J2. The conversion of the styrenyl quinolone into the tetrahydrofuran-containing yaequinolone C is performed by the FAD-dependent monooxygenase penE and involves epoxidation of the terminal C7'-C8' olefin, followed by epoxide ring opening initiated by the C3' hydroxyl group. The predicted cysteine hydrolase penJ acts as an epoxide hydrolase that enhances the rate of the 5-exo-tet cyclization step, increasing the yield of yaequinolone C. PenF catalyzes the cationic rearrangement of the epoxide formed by penE (before ring opening to produce yaequinolone C) into yaequinolone D. Finally, the short-chain dehydrogenase/reductase (SDR)-like reductase penD, catalyzes both the dehydration of yaequinolone D and the reduction of the resulting oxonium to yield penigequinolone. The protein is Iron/alpha-ketoglutarate-dependent dioxygenase penM of Penicillium thymicola.